A 213-amino-acid polypeptide reads, in one-letter code: Large ribosomal subunit protein uL1 (213 aa).

The protein belongs to the universal ribosomal protein uL1 family. As to quaternary structure, part of the 50S ribosomal subunit.

Its function is as follows. Binds directly to 23S rRNA. Probably involved in E site tRNA release. Functionally, protein L1 is also a translational repressor protein, it controls the translation of its operon by binding to its mRNA. In Methanocorpusculum labreanum (strain ATCC 43576 / DSM 4855 / Z), this protein is Large ribosomal subunit protein uL1.